We begin with the raw amino-acid sequence, 254 residues long: Vitamin B12 import ATP-binding protein BtuD (254 aa).

The ABC transporter domain occupies 3–239; sequence INYISVGNRL…ENLQQVFETP (237 aa). Residue 29-36 coordinates ATP; it reads GPNGSGKS.

It belongs to the ABC transporter superfamily. Vitamin B12 importer (TC 3.A.1.13.1) family. In terms of assembly, the complex is composed of two ATP-binding proteins (BtuD), two transmembrane proteins (BtuC) and a solute-binding protein (BtuF).

It localises to the cell inner membrane. The catalysed reaction is an R-cob(III)alamin(out) + ATP + H2O = an R-cob(III)alamin(in) + ADP + phosphate + H(+). In terms of biological role, part of the ABC transporter complex BtuCDF involved in vitamin B12 import. Responsible for energy coupling to the transport system. This chain is Vitamin B12 import ATP-binding protein BtuD, found in Vibrio vulnificus (strain CMCP6).